The primary structure comprises 124 residues: Non-specific lipid-transfer protein (124 aa).

The N-terminal stretch at 1-26 (MANSGVMKLVCLVLACMVVAAPLAEA) is a signal peptide. Cystine bridges form between C30–C77, C40–C54, C55–C100, and C75–C114.

Belongs to the plant LTP family.

Plant non-specific lipid-transfer proteins transfer phospholipids as well as galactolipids across membranes. May play a role in wax or cutin deposition in the cell walls of expanding epidermal cells and certain secretory tissues. This Macadamia integrifolia (Macadamia nut) protein is Non-specific lipid-transfer protein.